The sequence spans 1001 residues: UPF0182 protein Mjls_1469 (1001 aa).

7 helical membrane passes run 16–36 (VLIGVALAAVVLLLIGPRFID), 61–81 (VVVFLVVSLLIGAIVFAGLAL), 112–132 (LFGFGVPAFIGILSGIVAQSY), 174–194 (FVATFLAFIANLLGHYLFGGI), 209–229 (IQLVTLVGILILLKAFAYWLD), 258–278 (KLILLAIAVICAVAVFSAIVL), and 286–306 (IGVVLLLLSSLVVGAGWPLVV). Positions 900–929 (ATGPAPANLPDGQPAAQPPNGQQPAAQTPG) are enriched in low complexity. Positions 900 to 977 (ATGPAPANLP…MSGLQDAQRS (78 aa)) are disordered.

It belongs to the UPF0182 family.

It localises to the cell membrane. In Mycobacterium sp. (strain JLS), this protein is UPF0182 protein Mjls_1469.